A 390-amino-acid polypeptide reads, in one-letter code: L-rhamnonate dehydratase (390 aa).

2 residues coordinate substrate: His-19 and Arg-45. 3 residues coordinate Mg(2+): Asp-211, Glu-237, and Glu-265. His-315 functions as the Proton acceptor in the catalytic mechanism. Residue Glu-335 participates in substrate binding.

It belongs to the mandelate racemase/muconate lactonizing enzyme family. RhamD subfamily. The cofactor is Mg(2+).

The catalysed reaction is L-rhamnonate = 2-dehydro-3-deoxy-L-rhamnonate + H2O. Functionally, catalyzes the dehydration of L-rhamnonate to 2-keto-3-deoxy-L-rhamnonate (KDR). The protein is L-rhamnonate dehydratase of Saccharopolyspora erythraea (strain ATCC 11635 / DSM 40517 / JCM 4748 / NBRC 13426 / NCIMB 8594 / NRRL 2338).